Here is a 668-residue protein sequence, read N- to C-terminus: Ubiquitin ligase complex F-box protein UFO1 (668 aa).

The 47-residue stretch at Gly-5–Leu-51 folds into the F-box domain. Ser-511 carries the phosphoserine modification. Thr-514 is modified (phosphothreonine). UIM domains follow at residues Asp-547–Gln-566, Glu-583–Arg-602, and Asn-651–Asn-668. A compositionally biased stretch (polar residues) spans Glu-564–Asn-578. 2 disordered regions span residues Glu-564 to Asp-585 and Asp-599 to Thr-639.

In terms of assembly, interacts with SKP1. Component of the probable SCF(UFO1) complex containing CDC53, SKP1, RBX1 and UFO1.

The protein operates within protein modification; protein ubiquitination. Functionally, substrate recognition component of a SCF (SKP1-CUL1-F-box protein) E3 ubiquitin-protein ligase complex which mediates the ubiquitination and subsequent proteasomal degradation of target proteins. Probably recognizes and binds to phosphorylated target proteins. This chain is Ubiquitin ligase complex F-box protein UFO1 (UFO1), found in Saccharomyces cerevisiae (strain ATCC 204508 / S288c) (Baker's yeast).